Reading from the N-terminus, the 449-residue chain is tRNA modification GTPase MnmE (449 aa).

(6S)-5-formyl-5,6,7,8-tetrahydrofolate contacts are provided by R24, E81, and K121. A TrmE-type G domain is found at 218-375; the sequence is GLVVAITGPP…LIAALGKFAA (158 aa). GTP contacts are provided by residues 228–233, 247–253, and 272–275; these read NVGKST, SPHAGTT, and DTAG. 2 residues coordinate Mg(2+): S232 and T253. (6S)-5-formyl-5,6,7,8-tetrahydrofolate is bound at residue K449.

This sequence belongs to the TRAFAC class TrmE-Era-EngA-EngB-Septin-like GTPase superfamily. TrmE GTPase family. Homodimer. Heterotetramer of two MnmE and two MnmG subunits. Requires K(+) as cofactor.

It localises to the cytoplasm. Its function is as follows. Exhibits a very high intrinsic GTPase hydrolysis rate. Involved in the addition of a carboxymethylaminomethyl (cmnm) group at the wobble position (U34) of certain tRNAs, forming tRNA-cmnm(5)s(2)U34. The chain is tRNA modification GTPase MnmE from Rhodopseudomonas palustris (strain BisB18).